The sequence spans 411 residues: Peptidase T (411 aa).

His79 provides a ligand contact to Zn(2+). The active site involves Asp81. Asp142 serves as a coordination point for Zn(2+). Glu176 functions as the Proton acceptor in the catalytic mechanism. Residues Glu177, Asp199, and His381 each contribute to the Zn(2+) site.

The protein belongs to the peptidase M20B family. Zn(2+) is required as a cofactor.

The protein localises to the cytoplasm. It carries out the reaction Release of the N-terminal residue from a tripeptide.. Cleaves the N-terminal amino acid of tripeptides. The protein is Peptidase T of Geobacillus kaustophilus (strain HTA426).